A 132-amino-acid polypeptide reads, in one-letter code: NADH-quinone oxidoreductase subunit A (132 aa).

3 consecutive transmembrane segments (helical) span residues 7 to 27, 62 to 82, and 91 to 111; these read YWVL…MIGV, FYLI…LYAW, and WTGY…LAYL.

This sequence belongs to the complex I subunit 3 family. NDH-1 is composed of 14 different subunits. Subunits NuoA, H, J, K, L, M, N constitute the membrane sector of the complex.

The protein localises to the cell inner membrane. The catalysed reaction is a quinone + NADH + 5 H(+)(in) = a quinol + NAD(+) + 4 H(+)(out). Its function is as follows. NDH-1 shuttles electrons from NADH, via FMN and iron-sulfur (Fe-S) centers, to quinones in the respiratory chain. The immediate electron acceptor for the enzyme in this species is believed to be ubiquinone. Couples the redox reaction to proton translocation (for every two electrons transferred, four hydrogen ions are translocated across the cytoplasmic membrane), and thus conserves the redox energy in a proton gradient. This Acidiphilium cryptum (strain JF-5) protein is NADH-quinone oxidoreductase subunit A.